A 146-amino-acid chain; its full sequence is Hemoglobin subunit beta (146 aa).

An N-acetylvaline modification is found at Val1. The region spanning 2–146 (HLSDGEKNAI…VANALAHKYH (145 aa)) is the Globin domain. Ser44 carries the phosphoserine modification. An N6-acetyllysine modification is found at Lys59. His63 is a heme b binding site. Lys82 is subject to N6-acetyllysine. Residue His92 coordinates heme b. The residue at position 93 (Cys93) is an S-nitrosocysteine. Lys144 is subject to N6-acetyllysine.

Belongs to the globin family. Heterotetramer of two alpha chains and two beta chains. As to expression, red blood cells.

Involved in oxygen transport from the lung to the various peripheral tissues. This chain is Hemoglobin subunit beta (HBB), found in Spermophilus citellus (European ground squirrel).